A 121-amino-acid polypeptide reads, in one-letter code: Putative iron-sulfur cluster insertion protein ErpA (121 aa).

Iron-sulfur cluster-binding residues include Cys-49, Cys-113, and Cys-115.

This sequence belongs to the HesB/IscA family. Homodimer. It depends on iron-sulfur cluster as a cofactor.

Functionally, required for insertion of 4Fe-4S clusters. The sequence is that of Putative iron-sulfur cluster insertion protein ErpA from Methylibium petroleiphilum (strain ATCC BAA-1232 / LMG 22953 / PM1).